The following is a 629-amino-acid chain: Probable potassium transport system protein Kup 3 (629 aa).

A run of 12 helical transmembrane segments spans residues 20–40, 54–74, 106–126, 143–163, 171–191, 212–232, 253–273, 291–311, 343–363, 372–392, 400–420, and 425–445; these read LSLS…LYTF, VTTI…IASV, PFII…GTIT, PSLK…LFAI, IGKA…ILGA, FLFS…LCAT, WFGL…ALVL, FLLP…QAII, IYIG…IIGF, AYGI…FIAL, IITS…FFAA, and FING…MMYI.

This sequence belongs to the HAK/KUP transporter (TC 2.A.72) family.

The protein resides in the cell inner membrane. The catalysed reaction is K(+)(in) + H(+)(in) = K(+)(out) + H(+)(out). In terms of biological role, transport of potassium into the cell. Likely operates as a K(+):H(+) symporter. The sequence is that of Probable potassium transport system protein Kup 3 from Legionella pneumophila (strain Paris).